Reading from the N-terminus, the 722-residue chain is MRKILKLKIGRDELVFETGFMAKQANGSVLATYGGSSVLATVCCSSNVREDLDFVPLSVEYNEKYYAAGKIPGGFIKREGKPKDKEILVSRLIDRPMRPLFDKRFGREIQVIPTTLATDQLNPPDIVGMNAAFTAVFLSDIPFNGPIAAVRMVYLNGKFIVNPSFEEIHDSDLDIVVAGSLNGITMVEGGANEVGEDILLSAIDGAHEYIKQICNAQKEFLDIVGKKEKLPLAFEEKIFEFKDELRDFVYADLKEACFVKGKLNRDKAITLLRNKSYEYFSSLEKLTDSNESLFHKAFDDFEKEIVRSSILNDNIRTDGRTPNEIRDIISEVDILSRTHGSALFTRGETQALAVTTLGTSIDEQIMDDIDGDKRLNFMLHYNFPPFSVGETGRLMTGRREIGHGHLAQRALESMVPGKNDFPYTIRVVSEVLESNGSSSMATVCAGSMSLMSAGVPVKGQVAGIAMGLISEGDKYVVLSDILGEEDHLGDMDFKVAGTKNGITGFQMDIKIENVTKDLMRDALEQARIGRIHILSIMNTVISNSRVGISKYAPKIVQLQIDIDKISLVIGSTGKTVKAITDEFEVKVQIEQNGKIILFGDDDFKMQKAKERIESIVREPKVGEIYEGTVKKINSFGAFIELTPAKEGFLSTRLKPRDSKYGSGRFGNSNRYSRFGGGGENIRGNAGLVRPPKLEEGQRIKVKIIDIDKFGKIDLEIVRDKDY.

Positions 486 and 492 each coordinate Mg(2+). The region spanning 553 to 612 is the KH domain; the sequence is PKIVQLQIDIDKISLVIGSTGKTVKAITDEFEVKVQIEQNGKIILFGDDDFKMQKAKERI. In terms of domain architecture, S1 motif spans 622–717; that stretch reads GEIYEGTVKK…KFGKIDLEIV (96 aa).

The protein belongs to the polyribonucleotide nucleotidyltransferase family. Mg(2+) serves as cofactor.

The protein resides in the cytoplasm. The enzyme catalyses RNA(n+1) + phosphate = RNA(n) + a ribonucleoside 5'-diphosphate. Involved in mRNA degradation. Catalyzes the phosphorolysis of single-stranded polyribonucleotides processively in the 3'- to 5'-direction. The protein is Polyribonucleotide nucleotidyltransferase of Borreliella burgdorferi (strain ZS7) (Borrelia burgdorferi).